We begin with the raw amino-acid sequence, 144 residues long: Large ribosomal subunit protein uL15 (144 aa).

Residues 1–49 (MRLNTLSPAAGSKSAPKRVGRGIGSGLGKTAGRGHKGQKSRSGGGVRVG) form a disordered region. Residues 21-31 (RGIGSGLGKTA) show a composition bias toward gly residues.

This sequence belongs to the universal ribosomal protein uL15 family. Part of the 50S ribosomal subunit.

Its function is as follows. Binds to the 23S rRNA. This chain is Large ribosomal subunit protein uL15, found in Shewanella denitrificans (strain OS217 / ATCC BAA-1090 / DSM 15013).